Reading from the N-terminus, the 71-residue chain is Prokaryotic ubiquitin-like protein Pup (71 aa).

A compositionally biased stretch (low complexity) spans 1–18 (MATRDSGGQSQTGRSQQG). Positions 1 to 42 (MATRDSGGQSQTGRSQQGEEIEDVTTEASAEAAERHAEITED) are disordered. The ARC ATPase binding stretch occupies residues 27–65 (EASAEAAERHAEITEDVDDLLDEIDSVLEENAEEFVRGY). Residues 29–60 (SAEAAERHAEITEDVDDLLDEIDSVLEENAEE) adopt a coiled-coil conformation. An Isoglutamyl lysine isopeptide (Glu-Lys) (interchain with K-? in acceptor proteins) cross-link involves residue glutamate 71.

Belongs to the prokaryotic ubiquitin-like protein family. Strongly interacts with the proteasome-associated ATPase ARC through a hydrophobic interface; the interacting region of Pup lies in its C-terminal half. There is one Pup binding site per ARC hexamer ring.

It participates in protein degradation; proteasomal Pup-dependent pathway. In terms of biological role, protein modifier that is covalently attached to lysine residues of substrate proteins, thereby targeting them for proteasomal degradation. The tagging system is termed pupylation. The polypeptide is Prokaryotic ubiquitin-like protein Pup (Salinispora tropica (strain ATCC BAA-916 / DSM 44818 / JCM 13857 / NBRC 105044 / CNB-440)).